Consider the following 238-residue polypeptide: Aspartate/glutamate leucyltransferase (238 aa).

It belongs to the R-transferase family. Bpt subfamily.

It localises to the cytoplasm. It catalyses the reaction N-terminal L-glutamyl-[protein] + L-leucyl-tRNA(Leu) = N-terminal L-leucyl-L-glutamyl-[protein] + tRNA(Leu) + H(+). It carries out the reaction N-terminal L-aspartyl-[protein] + L-leucyl-tRNA(Leu) = N-terminal L-leucyl-L-aspartyl-[protein] + tRNA(Leu) + H(+). Functionally, functions in the N-end rule pathway of protein degradation where it conjugates Leu from its aminoacyl-tRNA to the N-termini of proteins containing an N-terminal aspartate or glutamate. This chain is Aspartate/glutamate leucyltransferase, found in Aeromonas hydrophila subsp. hydrophila (strain ATCC 7966 / DSM 30187 / BCRC 13018 / CCUG 14551 / JCM 1027 / KCTC 2358 / NCIMB 9240 / NCTC 8049).